Here is a 712-residue protein sequence, read N- to C-terminus: Golgin candidate 3 (712 aa).

Positions 23 to 49 (DEEEDDLHKYGSANGVSNSDRRNSSGF) are disordered. Polar residues predominate over residues 36–49 (NGVSNSDRRNSSGF). Residues 65-134 (AHHEIERYKA…LKEARTDISR (70 aa)) are a coiled coil. Positions 135–150 (GSNNYAIKGNNDQSPN) are enriched in polar residues. Disordered stretches follow at residues 135–176 (GSNN…TDSF) and 306–347 (ESRK…MEQS). Coiled-coil stretches lie at residues 197–313 (QATE…LTNS), 340–558 (GKEE…LNRM), and 659–690 (LKDA…QEAA). Basic and acidic residues predominate over residues 328–344 (STLDKEKPESFPGKEEM). Residues 557–608 (RMSMESDYLVDRRIVIKLLVTYFQKNHNKEVLDLMVRMLGFSEEDKERIGAA) enclose the GRIP domain. The segment at 666–712 (ERREAEEAAASKAKQDSERTRQEAALHDSEFSTVPLRSSESNQRLSR) is disordered. The span at 678–695 (AKQDSERTRQEAALHDSE) shows a compositional bias: basic and acidic residues. The span at 696-712 (FSTVPLRSSESNQRLSR) shows a compositional bias: polar residues.

As to quaternary structure, interacts with ARF1; preferentially with the active form of the protein.

It localises to the golgi apparatus. The protein resides in the endosome. Functionally, golgi matrix protein playing a role in tethering of vesicles to Golgi membranes and in maintaining the overall structure of the Golgi apparatus. The sequence is that of Golgin candidate 3 (GC3) from Arabidopsis thaliana (Mouse-ear cress).